The primary structure comprises 336 residues: Dihydroorotate dehydrogenase (quinone) (336 aa).

FMN contacts are provided by residues 62–66 (AGLDK) and threonine 86. A substrate-binding site is contributed by lysine 66. A substrate-binding site is contributed by 111 to 115 (NRMGF). FMN is bound by residues asparagine 139 and asparagine 172. Asparagine 172 is a substrate binding site. The active-site Nucleophile is serine 175. Asparagine 177 contacts substrate. Residues lysine 217 and threonine 245 each contribute to the FMN site. 246-247 (NT) serves as a coordination point for substrate. Residues glycine 268, glycine 297, and 318–319 (YS) contribute to the FMN site.

This sequence belongs to the dihydroorotate dehydrogenase family. Type 2 subfamily. As to quaternary structure, monomer. FMN is required as a cofactor.

It localises to the cell membrane. The catalysed reaction is (S)-dihydroorotate + a quinone = orotate + a quinol. It functions in the pathway pyrimidine metabolism; UMP biosynthesis via de novo pathway; orotate from (S)-dihydroorotate (quinone route): step 1/1. In terms of biological role, catalyzes the conversion of dihydroorotate to orotate with quinone as electron acceptor. This is Dihydroorotate dehydrogenase (quinone) from Escherichia coli (strain SE11).